Consider the following 726-residue polypeptide: Catalase-peroxidase (726 aa).

The signal sequence occupies residues 1–16 (MDNPTDSAGKCPVAHG). The interval 1-26 (MDNPTDSAGKCPVAHGNTPRSRSNRD) is disordered. Residues 96–218 (WHSAGTYRIT…LGAVQMGLIY (123 aa)) constitute a cross-link (tryptophyl-tyrosyl-methioninium (Trp-Tyr) (with M-244)). The Proton acceptor role is filled by histidine 97. The tryptophyl-tyrosyl-methioninium (Tyr-Met) (with W-96) cross-link spans 218-244 (YVNPEGPNGTPDPLASARDIRETFARM). Heme b is bound at residue histidine 259.

This sequence belongs to the peroxidase family. Peroxidase/catalase subfamily. As to quaternary structure, homodimer or homotetramer. Heme b serves as cofactor. Formation of the three residue Trp-Tyr-Met cross-link is important for the catalase, but not the peroxidase activity of the enzyme.

It carries out the reaction H2O2 + AH2 = A + 2 H2O. The catalysed reaction is 2 H2O2 = O2 + 2 H2O. Its function is as follows. Bifunctional enzyme with both catalase and broad-spectrum peroxidase activity. This Rhizobium johnstonii (strain DSM 114642 / LMG 32736 / 3841) (Rhizobium leguminosarum bv. viciae) protein is Catalase-peroxidase.